A 220-amino-acid chain; its full sequence is Flavin-dependent thymidylate synthase (220 aa).

Residues 1–208 (MKIDILDKGF…PWTFEAFLKY (208 aa)) enclose the ThyX domain. FAD-binding positions include T55, 78-81 (RHRI), and E86. Residues 75-78 (QWFR), 86-90 (ELSGR), and R147 each bind dUMP. A ThyX motif motif is present at residues 78–88 (RHRIASYNELS). Residues 163–165 (NAR) and N169 contribute to the FAD site. Residue R174 participates in dUMP binding. R174 acts as the Involved in ionization of N3 of dUMP, leading to its activation in catalysis.

Belongs to the thymidylate synthase ThyX family. As to quaternary structure, homotetramer. FAD is required as a cofactor.

It catalyses the reaction dUMP + (6R)-5,10-methylene-5,6,7,8-tetrahydrofolate + NADPH + H(+) = dTMP + (6S)-5,6,7,8-tetrahydrofolate + NADP(+). The enzyme catalyses dUMP + formaldehyde + NADPH + H(+) = dTMP + NADP(+) + H2O. Its pathway is pyrimidine metabolism; dTTP biosynthesis. Its function is as follows. Catalyzes the reductive methylation of 2'-deoxyuridine-5'-monophosphate (dUMP or deoxyuridylate) to 2'-deoxythymidine-5'-monophosphate (dTMP or deoxythymidylate) while utilizing 5,10-methylenetetrahydrofolate (mTHF) as the methylene donor, and NAD(P)H and FADH(2) as the reductant. This reaction is a critical step in DNA biosynthesis. Can also use formaldehyde instead of mTHF as a direct methylene donor for dTMP synthesis. However, the tighter binding of ThyX to mTHF (KD of 4 uM) compared to formaldehyde (KD of 20 mM) confirms that methylene tetrahydrofolate acts as the biological carbon donor for ThyX, serving as a formaldehyde carrier/transporter and thus avoiding genotoxic effects. The protein is Flavin-dependent thymidylate synthase of Thermotoga maritima (strain ATCC 43589 / DSM 3109 / JCM 10099 / NBRC 100826 / MSB8).